A 396-amino-acid polypeptide reads, in one-letter code: Phosphoglycerate kinase (396 aa).

Substrate-binding positions include 21-23 (DLN), R36, 59-62 (HFDR), R118, and R151. ATP-binding positions include K201, E323, and 353–356 (GGDT).

Belongs to the phosphoglycerate kinase family. Monomer.

The protein resides in the cytoplasm. It carries out the reaction (2R)-3-phosphoglycerate + ATP = (2R)-3-phospho-glyceroyl phosphate + ADP. Its pathway is carbohydrate degradation; glycolysis; pyruvate from D-glyceraldehyde 3-phosphate: step 2/5. In Granulibacter bethesdensis (strain ATCC BAA-1260 / CGDNIH1), this protein is Phosphoglycerate kinase.